The following is a 469-amino-acid chain: 3-isopropylmalate dehydratase large subunit (469 aa).

Residues cysteine 347, cysteine 410, and cysteine 413 each contribute to the [4Fe-4S] cluster site.

This sequence belongs to the aconitase/IPM isomerase family. LeuC type 1 subfamily. Heterodimer of LeuC and LeuD. [4Fe-4S] cluster is required as a cofactor.

It catalyses the reaction (2R,3S)-3-isopropylmalate = (2S)-2-isopropylmalate. Its pathway is amino-acid biosynthesis; L-leucine biosynthesis; L-leucine from 3-methyl-2-oxobutanoate: step 2/4. In terms of biological role, catalyzes the isomerization between 2-isopropylmalate and 3-isopropylmalate, via the formation of 2-isopropylmaleate. The chain is 3-isopropylmalate dehydratase large subunit from Ralstonia nicotianae (strain ATCC BAA-1114 / GMI1000) (Ralstonia solanacearum).